The sequence spans 341 residues: Retinol dehydrogenase 10 (341 aa).

The helical; Signal-anchor transmembrane segment at Ile-3–Ala-23 threads the bilayer. Position 40-64 (Leu-40–Val-64) interacts with NADP(+). Ser-197 contacts substrate. Tyr-210 acts as the Proton acceptor in catalysis.

This sequence belongs to the short-chain dehydrogenases/reductases (SDR) family.

The protein resides in the microsome membrane. The protein localises to the endoplasmic reticulum membrane. The catalysed reaction is all-trans-retinol + NADP(+) = all-trans-retinal + NADPH + H(+). It participates in cofactor metabolism; retinol metabolism. Its function is as follows. Retinol dehydrogenase with a clear preference for NADP. Converts all-trans-retinol to all-trans-retinal. Has no detectable activity towards 11-cis-retinol, 9-cis-retinol and 13-cis-retinol. The chain is Retinol dehydrogenase 10 (rdh10) from Xenopus tropicalis (Western clawed frog).